A 422-amino-acid polypeptide reads, in one-letter code: Hispidin-3-hydroxylase (422 aa).

A helical transmembrane segment spans residues 6-26; it reads NSLSVLIVGAGLGGLAAAIAL. Residues Ala-50, Arg-108, and Asp-318 each contribute to the FAD site.

The protein belongs to the paxM FAD-dependent monooxygenase family. As to quaternary structure, monomer. FAD is required as a cofactor.

The protein localises to the membrane. The catalysed reaction is hispidin + NADH + O2 + H(+) = 3-hydroxyhispidin + NAD(+) + H2O. It carries out the reaction hispidin + NADPH + O2 + H(+) = 3-hydroxyhispidin + NADP(+) + H2O. It functions in the pathway secondary metabolite biosynthesis. Functionally, hispidin-3-hydroxylase; part of the gene cluster that mediates the fungal bioluminescence cycle. Hydroxylates hispidin in order to produce the fungal luciferin 3-hydroxyhispidin. The fungal bioluminescence cycle begins with the hispidin synthetase that catalyzes the formation of hispidin which is further hydroxylated by the hispidin-3-hydroxylase, yielding the fungal luciferin 3-hydroxyhispidin. The luciferase then produces an endoperoxide as a high-energy intermediate with decomposition that yields oxyluciferin (also known as caffeoylpyruvate) and light emission. Oxyluciferin can be recycled to caffeic acid by caffeoylpyruvate hydrolase. In Neonothopanus nambi (Agaricus nambi), this protein is Hispidin-3-hydroxylase.